We begin with the raw amino-acid sequence, 1241 residues long: uncharacterized protein (1241 aa).

Residues 21–49 (ILNDNVREINIAKKEIKQLREYVGILQQN) are a coiled coil. A run of 3 helical transmembrane segments spans residues 261–281 (VNAI…FVLG), 918–938 (AVVG…GLVA), and 947–967 (GHIV…VIGG). The interval 1005-1028 (THIGKEDSNNGVSTSTNKRSIGKA) is disordered. Residues 1013–1028 (NNGVSTSTNKRSIGKA) show a composition bias toward polar residues.

It localises to the host membrane. This is an uncharacterized protein from Diadromus pulchellus (Parasitic wasp).